Here is a 294-residue protein sequence, read N- to C-terminus: MIKYYLYLTKPGIVLGNLMSSAGGFLIASRGAISYSLFITMIVGTALVIASGCVLNNIIDRDIDAVMERTKHRVLVQHGQIFLNQSIFYAVILSIFGFLFLSFTKNVLTIYLSAIGLFIYVGVYSLWMKRRSIYSIMVGSISGAMPPVIGYCAAANQFDAGALMLLIIFSLWQIPHSHSIAILRLNDYKVAFIPTFPIKKGVESTKNHMVVYIIGFIIATILFTVMGYTSYIFLIIISIMNLWWLHMGFYGYRIINHDSLWAKKMFLLSLIIIISLNLLLSLDHILFSTKNILL.

The next 9 membrane-spanning stretches (helical) occupy residues 8 to 28 (LTKP…FLIA), 35 to 55 (YSLF…GCVL), 81 to 101 (IFLN…FLFL), 107 to 127 (VLTI…YSLW), 133 to 153 (IYSI…GYCA), 163 to 183 (LMLL…IAIL), 209 to 226 (MVVY…FTVM), 230 to 252 (SYIF…FYGY), and 266 to 286 (FLLS…DHIL).

Belongs to the UbiA prenyltransferase family. Protoheme IX farnesyltransferase subfamily.

The protein localises to the cell inner membrane. It catalyses the reaction heme b + (2E,6E)-farnesyl diphosphate + H2O = Fe(II)-heme o + diphosphate. It functions in the pathway porphyrin-containing compound metabolism; heme O biosynthesis; heme O from protoheme: step 1/1. Converts heme B (protoheme IX) to heme O by substitution of the vinyl group on carbon 2 of heme B porphyrin ring with a hydroxyethyl farnesyl side group. The chain is Protoheme IX farnesyltransferase from Blochmanniella pennsylvanica (strain BPEN).